A 415-amino-acid chain; its full sequence is Tyrosine--tRNA ligase (415 aa).

Positions 54 to 63 match the 'HIGH' region motif; the sequence is PTGTDIHIGH. Positions 248–252 match the 'KMSKS' region motif; sequence KMSKS. Lys-251 lines the ATP pocket. An S4 RNA-binding domain is found at 351-415; it reads AKAFYLFSKM…GKKKFLRVST (65 aa).

This sequence belongs to the class-I aminoacyl-tRNA synthetase family. TyrS type 2 subfamily. As to quaternary structure, homodimer.

It is found in the cytoplasm. It carries out the reaction tRNA(Tyr) + L-tyrosine + ATP = L-tyrosyl-tRNA(Tyr) + AMP + diphosphate + H(+). In terms of biological role, catalyzes the attachment of tyrosine to tRNA(Tyr) in a two-step reaction: tyrosine is first activated by ATP to form Tyr-AMP and then transferred to the acceptor end of tRNA(Tyr). The sequence is that of Tyrosine--tRNA ligase from Prochlorococcus marinus (strain NATL2A).